The primary structure comprises 289 residues: DegV domain-containing protein YteA (289 aa).

The DegV domain maps to 3–284; sequence FQIMTDSTAD…DGTIAIFSIS (282 aa). Hexadecanoate contacts are provided by T62 and S94.

May bind long-chain fatty acids, such as palmitate, and may play a role in lipid transport or fatty acid metabolism. This is DegV domain-containing protein YteA (yteA) from Lactococcus lactis subsp. lactis (strain IL1403) (Streptococcus lactis).